The sequence spans 215 residues: MSEAKRLAAEKAIEYVEDGMIVGVGTGSTVAYFIDALARIQHRIKGAVSSSEQSTARLKQHGIEVIELNHSGNLSLYVDGADECDANKCLIKGGGAALTREKIIAEASERFICIIDPSKQVPVLGRFPLPVEVIPMARSLVARQIRDMTGGQPTWREGVVTDNGNQILDIHNLQITDPEKLERELNQLPGVVCVGLFARRRADVVIVGGEPPVVL.

Residues 26 to 29 (TGST), 79 to 82 (DGAD), and 92 to 95 (KGGG) contribute to the substrate site. The Proton acceptor role is filled by Glu101. Lys119 contributes to the substrate binding site.

The protein belongs to the ribose 5-phosphate isomerase family. As to quaternary structure, homodimer.

It catalyses the reaction aldehydo-D-ribose 5-phosphate = D-ribulose 5-phosphate. It functions in the pathway carbohydrate degradation; pentose phosphate pathway; D-ribose 5-phosphate from D-ribulose 5-phosphate (non-oxidative stage): step 1/1. Functionally, catalyzes the reversible conversion of ribose-5-phosphate to ribulose 5-phosphate. This chain is Ribose-5-phosphate isomerase A, found in Stenotrophomonas maltophilia (strain K279a).